The chain runs to 284 residues: Formamidopyrimidine-DNA glycosylase (284 aa).

Residue P2 is the Schiff-base intermediate with DNA of the active site. E3 (proton donor) is an active-site residue. Catalysis depends on K59, which acts as the Proton donor; for beta-elimination activity. DNA is bound by residues H94 and R113. The FPG-type zinc-finger motif lies at K239–K273. The active-site Proton donor; for delta-elimination activity is the R263.

It belongs to the FPG family. Monomer. It depends on Zn(2+) as a cofactor.

It catalyses the reaction Hydrolysis of DNA containing ring-opened 7-methylguanine residues, releasing 2,6-diamino-4-hydroxy-5-(N-methyl)formamidopyrimidine.. The enzyme catalyses 2'-deoxyribonucleotide-(2'-deoxyribose 5'-phosphate)-2'-deoxyribonucleotide-DNA = a 3'-end 2'-deoxyribonucleotide-(2,3-dehydro-2,3-deoxyribose 5'-phosphate)-DNA + a 5'-end 5'-phospho-2'-deoxyribonucleoside-DNA + H(+). Involved in base excision repair of DNA damaged by oxidation or by mutagenic agents. Acts as a DNA glycosylase that recognizes and removes damaged bases. Has a preference for oxidized purines, such as 7,8-dihydro-8-oxoguanine (8-oxoG). Has AP (apurinic/apyrimidinic) lyase activity and introduces nicks in the DNA strand. Cleaves the DNA backbone by beta-delta elimination to generate a single-strand break at the site of the removed base with both 3'- and 5'-phosphates. The protein is Formamidopyrimidine-DNA glycosylase (mutM) of Mycoplasma genitalium (strain ATCC 33530 / DSM 19775 / NCTC 10195 / G37) (Mycoplasmoides genitalium).